A 1017-amino-acid polypeptide reads, in one-letter code: Nonsense-mediated mRNA decay factor SMG5 (1017 aa).

Residue S2 is modified to N-acetylserine. A phosphoserine mark is found at S2 and S423. 2 disordered regions span residues 406–562 and 597–640; these read GENP…PSEA and TEPN…CRNE. Residues 448-467 show a composition bias toward basic residues; it reads KSRKHSRLSCLRRRRRHHPP. Over residues 486-496 the composition is skewed to low complexity; it reads DSAQASDGSDS. Residues 620 to 629 are compositionally biased toward acidic residues; it reads ASEDGSESEG. Residues 798–842 are a coiled coil; the sequence is AQSEQESLLQQAQAQFRMAEEEARRNRLMRDMAQLRLQLEVSQLE. The PINc domain occupies 873–996; it reads RQLATSGRFI…GPMQAALQAA (124 aa).

Interacts with TERT, PPP2CA and SMG1. Part of a complex that contains SMG1, SMG5, SMG7, PPP2CA, a short isoform of UPF3A (isoform UPF3AS, but not isoform UPF3AL) and phosphorylated UPF1. Not detected in complexes that contain unphosphorylated UPF1.

The protein localises to the cytoplasm. It localises to the nucleus. Its function is as follows. Plays a role in nonsense-mediated mRNA decay. Does not have RNase activity by itself. Promotes dephosphorylation of UPF1. Together with SMG7 is thought to provide a link to the mRNA degradation machinery involving exonucleolytic pathways, and to serve as an adapter for UPF1 to protein phosphatase 2A (PP2A), thereby triggering UPF1 dephosphorylation. Necessary for TERT activity. The chain is Nonsense-mediated mRNA decay factor SMG5 from Mus musculus (Mouse).